Consider the following 172-residue polypeptide: NAD(P)H-quinone oxidoreductase subunit J (172 aa).

Belongs to the complex I 30 kDa subunit family. As to quaternary structure, NDH-1 can be composed of about 15 different subunits; different subcomplexes with different compositions have been identified which probably have different functions.

Its subcellular location is the cellular thylakoid membrane. It catalyses the reaction a plastoquinone + NADH + (n+1) H(+)(in) = a plastoquinol + NAD(+) + n H(+)(out). It carries out the reaction a plastoquinone + NADPH + (n+1) H(+)(in) = a plastoquinol + NADP(+) + n H(+)(out). Functionally, NDH-1 shuttles electrons from an unknown electron donor, via FMN and iron-sulfur (Fe-S) centers, to quinones in the respiratory and/or the photosynthetic chain. The immediate electron acceptor for the enzyme in this species is believed to be plastoquinone. Couples the redox reaction to proton translocation, and thus conserves the redox energy in a proton gradient. Cyanobacterial NDH-1 also plays a role in inorganic carbon-concentration. In Synechococcus elongatus (strain ATCC 33912 / PCC 7942 / FACHB-805) (Anacystis nidulans R2), this protein is NAD(P)H-quinone oxidoreductase subunit J.